Consider the following 255-residue polypeptide: 3-dehydroquinate dehydratase (255 aa).

3-dehydroquinate contacts are provided by residues 47–49 (EWR) and Arg-83. His-145 serves as the catalytic Proton donor/acceptor. The active-site Schiff-base intermediate with substrate is the Lys-172. 3-dehydroquinate-binding residues include Arg-215, Ser-234, and Gln-238.

It belongs to the type-I 3-dehydroquinase family. Homodimer.

The catalysed reaction is 3-dehydroquinate = 3-dehydroshikimate + H2O. Its pathway is metabolic intermediate biosynthesis; chorismate biosynthesis; chorismate from D-erythrose 4-phosphate and phosphoenolpyruvate: step 3/7. In terms of biological role, involved in the third step of the chorismate pathway, which leads to the biosynthesis of aromatic amino acids. Catalyzes the cis-dehydration of 3-dehydroquinate (DHQ) and introduces the first double bond of the aromatic ring to yield 3-dehydroshikimate. This Clostridium kluyveri (strain NBRC 12016) protein is 3-dehydroquinate dehydratase.